The following is a 400-amino-acid chain: Large envelope protein (400 aa).

M1 carries the N-acetylmethionine modification. Disordered regions lie at residues 1-54 (MGGW…HWPE) and 85-116 (LTTV…RDSH). G2 is lipidated: N-myristoyl glycine; by host. The tract at residues 2–119 (GGWSSKPRQG…PPLRDSHPQA (118 aa)) is pre-S1. Residues 2–174 (GGWSSKPRQG…FSRTGDPAPN (173 aa)) are pre-S. Residues 2 to 181 (GGWSSKPRQG…APNMENTTSG (180 aa)) lie on the Virion surface; in external conformation side of the membrane. Over 2-253 (GGWSSKPRQG…PGYRWMCLRR (252 aa)) the chain is Intravirion; in internal conformation. W4 carries an N-linked (GlcNAc...) asparagine glycan. The span at 96–106 (STNRQSGRQPT) shows a compositional bias: polar residues. The pre-S2 stretch occupies residues 120–174 (MQWNSTTFHQALLDPRVRGLYFPAGGSSSGTVNPVPTTASPISSIFSRTGDPAPN). The chain crosses the membrane as a helical span at residues 182 to 202 (FLGPLLVLQAGFFLLTRILTI). Residues 203–253 (PQSLDSWWTSLNFLGGAPTCPGQNSQSPTSNHSPTSCPPICPGYRWMCLRR) are Intravirion; in external conformation-facing. A helical membrane pass occupies residues 254–274 (FIIFLFILLLCLIFLLVLLDY). Over 275 to 348 (QGMLPVCPLL…WASVRFSWLS (74 aa)) the chain is Virion surface. N-linked (GlcNAc...) asparagine; by host glycosylation occurs at N320. A helical membrane pass occupies residues 349–369 (LLVPFVQWFAGLSPTVWLSVI). Over 370–375 (WMMWYW) the chain is Intravirion. A helical membrane pass occupies residues 376 to 398 (GPSLYNILSPFLPLLPIFFCLWV). Residues 399–400 (YI) lie on the Virion surface side of the membrane.

It belongs to the orthohepadnavirus major surface antigen family. As to quaternary structure, in its internal form (Li-HBsAg), interacts with the capsid protein and with the isoform S. Interacts with host chaperone CANX. In terms of assembly, associates with host chaperone CANX through its pre-S2 N glycan; this association may be essential for isoform M proper secretion. Interacts with isoform L. Interacts with the antigens of satellite virus HDV (HDVAgs); this interaction is required for encapsidation of HDV genomic RNA. In terms of processing, isoform M is N-terminally acetylated by host at a ratio of 90%, and N-glycosylated by host at the pre-S2 region. Post-translationally, myristoylated.

It localises to the virion membrane. Functionally, the large envelope protein exists in two topological conformations, one which is termed 'external' or Le-HBsAg and the other 'internal' or Li-HBsAg. In its external conformation the protein attaches the virus to cell receptors and thereby initiating infection. This interaction determines the species specificity and liver tropism. This attachment induces virion internalization predominantly through caveolin-mediated endocytosis. The large envelope protein also assures fusion between virion membrane and endosomal membrane. In its internal conformation the protein plays a role in virion morphogenesis and mediates the contact with the nucleocapsid like a matrix protein. The middle envelope protein plays an important role in the budding of the virion. It is involved in the induction of budding in a nucleocapsid independent way. In this process the majority of envelope proteins bud to form subviral lipoprotein particles of 22 nm of diameter that do not contain a nucleocapsid. This chain is Large envelope protein, found in Homo sapiens (Human).